Consider the following 96-residue polypeptide: Putative septation protein SpoVG (96 aa).

Belongs to the SpoVG family.

Functionally, could be involved in septation. The chain is Putative septation protein SpoVG from Borrelia hermsii (strain HS1 / DAH).